The primary structure comprises 614 residues: DNA ligase (614 aa).

NAD(+)-binding positions include 29–33 (DQDYD) and 73–74 (SI). The active-site N6-AMP-lysine intermediate is the K111. NAD(+) contacts are provided by R127, E158, and K270. Zn(2+)-binding residues include C358, C361, C374, and C380. The 77-residue stretch at 538 to 614 (TLTHELFDKK…MTETDYLSKI (77 aa)) folds into the BRCT domain.

This sequence belongs to the NAD-dependent DNA ligase family. LigA subfamily. Mg(2+) is required as a cofactor. It depends on Mn(2+) as a cofactor.

It carries out the reaction NAD(+) + (deoxyribonucleotide)n-3'-hydroxyl + 5'-phospho-(deoxyribonucleotide)m = (deoxyribonucleotide)n+m + AMP + beta-nicotinamide D-nucleotide.. DNA ligase that catalyzes the formation of phosphodiester linkages between 5'-phosphoryl and 3'-hydroxyl groups in double-stranded DNA using NAD as a coenzyme and as the energy source for the reaction. It is essential for DNA replication and repair of damaged DNA. The chain is DNA ligase from Ruthia magnifica subsp. Calyptogena magnifica.